A 313-amino-acid polypeptide reads, in one-letter code: Alpha/beta-gliadin clone PW8142 (313 aa).

Residues 1–20 form the signal peptide; the sequence is MKTFLILALVATTATTAVRV. Over residues 22–55 the composition is skewed to low complexity; it reads VPQLQPKNPSQQQPQEQVPLVQQQQFPGQQQQFP. Disordered regions lie at residues 22-122 and 234-272; these read VPQL…QQAQ and QQPS…VQPQ. 2 stretches are compositionally biased toward pro residues: residues 56–68 and 78–101; these read PQQP…PFPS and FPQP…PQQP. 2 stretches are compositionally biased toward low complexity: residues 102–122 and 234–264; these read YPQQ…QQAQ and QQPS…QNPQ.

The protein belongs to the gliadin/glutenin family. In terms of processing, substrate of transglutaminase.

Functionally, gliadin is the major seed storage protein in wheat. The chain is Alpha/beta-gliadin clone PW8142 from Triticum aestivum (Wheat).